Reading from the N-terminus, the 273-residue chain is 4-hydroxy-tetrahydrodipicolinate reductase (273 aa).

Residues 12 to 17 and Glu38 each bind NAD(+); that span reads GAGGRM. An NADP(+)-binding site is contributed by Arg39. Residues 102-104 and 126-129 contribute to the NAD(+) site; these read GTT and AANF. The Proton donor/acceptor role is filled by His159. His160 provides a ligand contact to (S)-2,3,4,5-tetrahydrodipicolinate. Residue Lys163 is the Proton donor of the active site. 169-170 lines the (S)-2,3,4,5-tetrahydrodipicolinate pocket; that stretch reads GT.

This sequence belongs to the DapB family. As to quaternary structure, homotetramer.

The protein localises to the cytoplasm. It catalyses the reaction (S)-2,3,4,5-tetrahydrodipicolinate + NAD(+) + H2O = (2S,4S)-4-hydroxy-2,3,4,5-tetrahydrodipicolinate + NADH + H(+). The catalysed reaction is (S)-2,3,4,5-tetrahydrodipicolinate + NADP(+) + H2O = (2S,4S)-4-hydroxy-2,3,4,5-tetrahydrodipicolinate + NADPH + H(+). It functions in the pathway amino-acid biosynthesis; L-lysine biosynthesis via DAP pathway; (S)-tetrahydrodipicolinate from L-aspartate: step 4/4. Catalyzes the conversion of 4-hydroxy-tetrahydrodipicolinate (HTPA) to tetrahydrodipicolinate. The protein is 4-hydroxy-tetrahydrodipicolinate reductase of Escherichia coli O139:H28 (strain E24377A / ETEC).